The chain runs to 1040 residues: Probable starch synthase 4, chloroplastic/amyloplastic (1040 aa).

A chloroplast-targeting transit peptide spans 1–42; the sequence is MTTKLSSFCFLTHGLAGISCEREHGSSRRFFYLPSRRLVSTS. The tract at residues 43 to 142 is disordered; sequence CKMRQQRGFD…KSKTAKKKGE (100 aa). Composition is skewed to basic and acidic residues over residues 52–61 and 112–124; these read DSSKRQEVKK and NHAD…KDDI. Residues 187–466 adopt a coiled-coil conformation; that stretch reads ELMTMIRSAE…EESKKKSRDE (280 aa). ADP contacts are provided by K556, G559, and D562. W679 and Q680 together coordinate (1,4-alpha-D-glucosyl)n. Positions 849, 854, 906, 908, 916, 933, and 934 each coordinate ADP.

The protein belongs to the glycosyltransferase 1 family. Bacterial/plant glycogen synthase subfamily. In terms of assembly, interacts with PTST2. Interacts with PII1; the interaction is essential for the initiation of starch granules biosynthesis in leaf chloroplasts. As to expression, expressed in leaves and flowers.

It localises to the plastid. It is found in the chloroplast. Its subcellular location is the amyloplast. The protein resides in the chloroplast stroma. It catalyses the reaction [(1-&gt;4)-alpha-D-glucosyl](n) + ADP-alpha-D-glucose = [(1-&gt;4)-alpha-D-glucosyl](n+1) + ADP + H(+). Its pathway is glycan biosynthesis; starch biosynthesis. Functionally, probably involved in the priming of starch granule formation. May play a regulatory role in the control of starch accumulation in plastids. Is necessary and sufficient to establish the correct number of starch granules observed in chloroplasts. The polypeptide is Probable starch synthase 4, chloroplastic/amyloplastic (Arabidopsis thaliana (Mouse-ear cress)).